A 348-amino-acid chain; its full sequence is Holliday junction branch migration complex subunit RuvB (348 aa).

The tract at residues 4-184 is large ATPase domain (RuvB-L); it reads ADRLIAASGR…FGIVQRLEFY (181 aa). ATP-binding positions include Ile-23, Arg-24, Gly-65, Lys-68, Thr-69, Thr-70, 131–133, Arg-174, Tyr-184, and Arg-221; that span reads EDF. Thr-69 is a Mg(2+) binding site. Residues 185–255 form a small ATPAse domain (RuvB-S) region; the sequence is NDKDLSTIVS…VADMALNLLD (71 aa). Residues 258-348 are head domain (RuvB-H); the sequence is ERGFDHSDRR…GGDFSGPGDE (91 aa). 3 residues coordinate DNA: Arg-294, Arg-313, and Arg-318.

The protein belongs to the RuvB family. As to quaternary structure, homohexamer. Forms an RuvA(8)-RuvB(12)-Holliday junction (HJ) complex. HJ DNA is sandwiched between 2 RuvA tetramers; dsDNA enters through RuvA and exits via RuvB. An RuvB hexamer assembles on each DNA strand where it exits the tetramer. Each RuvB hexamer is contacted by two RuvA subunits (via domain III) on 2 adjacent RuvB subunits; this complex drives branch migration. In the full resolvosome a probable DNA-RuvA(4)-RuvB(12)-RuvC(2) complex forms which resolves the HJ.

It localises to the cytoplasm. The enzyme catalyses ATP + H2O = ADP + phosphate + H(+). In terms of biological role, the RuvA-RuvB-RuvC complex processes Holliday junction (HJ) DNA during genetic recombination and DNA repair, while the RuvA-RuvB complex plays an important role in the rescue of blocked DNA replication forks via replication fork reversal (RFR). RuvA specifically binds to HJ cruciform DNA, conferring on it an open structure. The RuvB hexamer acts as an ATP-dependent pump, pulling dsDNA into and through the RuvAB complex. RuvB forms 2 homohexamers on either side of HJ DNA bound by 1 or 2 RuvA tetramers; 4 subunits per hexamer contact DNA at a time. Coordinated motions by a converter formed by DNA-disengaged RuvB subunits stimulates ATP hydrolysis and nucleotide exchange. Immobilization of the converter enables RuvB to convert the ATP-contained energy into a lever motion, pulling 2 nucleotides of DNA out of the RuvA tetramer per ATP hydrolyzed, thus driving DNA branch migration. The RuvB motors rotate together with the DNA substrate, which together with the progressing nucleotide cycle form the mechanistic basis for DNA recombination by continuous HJ branch migration. Branch migration allows RuvC to scan DNA until it finds its consensus sequence, where it cleaves and resolves cruciform DNA. The chain is Holliday junction branch migration complex subunit RuvB from Pseudomonas putida (strain ATCC 700007 / DSM 6899 / JCM 31910 / BCRC 17059 / LMG 24140 / F1).